The sequence spans 366 residues: MVPEMSERQEFQASDFAYLLENSSYDYGENETYFCCTSPPCPQDFSLNFDRTFLPVLYSLLFVLGLLGNGIVAVVLLSQRAALSSTDTFLLHLAVADALLVLTLPLWAVDAAIQWVFGSGLCKVAGALFNINFYAGALLLACISFDRYLSIVHATQLYRRGPPTRVALTCVAVWGLCLLFALPDFIFLSSHHDNRLNATHCQYNFPQEGHTALRILQLVAGFLLPLLVMAYCYARILAVLLVSRGQRRLRAMRLVVVVVVAFALCWTPYHLVVLVDTLMDLGALARNCGRESSVDIAKSVTSGMGYMHCCLNPLLYAFVGVKFRERMWVLLVRLGCPDQRCHQRQPSASRRESSWSETTEASYSGL.

At 1–55 (MVPEMSERQEFQASDFAYLLENSSYDYGENETYFCCTSPPCPQDFSLNFDRTFLP) the chain is on the extracellular side. N22 carries an N-linked (GlcNAc...) asparagine glycan. Residues Y25 and Y27 each carry the sulfotyrosine modification. N30 is a glycosylation site (N-linked (GlcNAc...) asparagine). The helical transmembrane segment at 56 to 76 (VLYSLLFVLGLLGNGIVAVVL) threads the bilayer. The Cytoplasmic portion of the chain corresponds to 77 to 88 (LSQRAALSSTDT). The helical transmembrane segment at 89-109 (FLLHLAVADALLVLTLPLWAV) threads the bilayer. Residues 110 to 124 (DAAIQWVFGSGLCKV) are Extracellular-facing. Cysteines 122 and 201 form a disulfide. Residues 125-145 (AGALFNINFYAGALLLACISF) form a helical membrane-spanning segment. Residues 146 to 167 (DRYLSIVHATQLYRRGPPTRVA) are Cytoplasmic-facing. Residues 168–188 (LTCVAVWGLCLLFALPDFIFL) form a helical membrane-spanning segment. The Extracellular portion of the chain corresponds to 189–221 (SSHHDNRLNATHCQYNFPQEGHTALRILQLVAG). The N-linked (GlcNAc...) asparagine glycan is linked to N197. A helical membrane pass occupies residues 222-242 (FLLPLLVMAYCYARILAVLLV). Over 243-254 (SRGQRRLRAMRL) the chain is Cytoplasmic. The helical transmembrane segment at 255–275 (VVVVVVAFALCWTPYHLVVLV) threads the bilayer. The Extracellular segment spans residues 276 to 299 (DTLMDLGALARNCGRESSVDIAKS). The helical transmembrane segment at 300-320 (VTSGMGYMHCCLNPLLYAFVG) threads the bilayer. The Cytoplasmic segment spans residues 321–366 (VKFRERMWVLLVRLGCPDQRCHQRQPSASRRESSWSETTEASYSGL). Positions 341-366 (CHQRQPSASRRESSWSETTEASYSGL) are disordered. Low complexity predominate over residues 355-366 (WSETTEASYSGL).

The protein belongs to the G-protein coupled receptor 1 family. As to quaternary structure, homomer. Forms heteromers with ACKR4. Interacts with PF4/CXCL4. In terms of processing, sulfation on Tyr-25 and Tyr-27 is essential for CXCL10 binding. N-glycosylated.

It is found in the cell membrane. Its function is as follows. Receptor for the C-X-C chemokine CXCL9, CXCL10 and CXCL11 and mediates the proliferation, survival and angiogenic activity of mesangial cells through a heterotrimeric G-protein signaling pathway. Probably promotes cell chemotaxis response. Binds to CCL21. Upon activation by PF4, induces activated T-lymphocytes migration mediated via downstream Ras/extracellular signal-regulated kinase (ERK) signaling. This Bos taurus (Bovine) protein is C-X-C chemokine receptor type 3 (CXCR3).